The following is a 234-amino-acid chain: MTHPFLFLKWLVEHFTQGTSLENLEHYGFLVHVTHAWLIMLLLTGVALLLKRRLSEVPGGLQNLVEIVLVELGRLADETMGPKGRRYFPLIATLALFILFSNLIALIPGFAPPTANLNTNAALALAVFGMTHVVGVREHGLKYFKHFVGPVWWLAPLILPIEIIGHLARPLSLALRLFGNMYGHEIVLVIFFTLVPLLLPIPMMLMGILVAFIQTFVFTLLAMIYIAGALEEAH.

6 consecutive transmembrane segments (helical) span residues 29–49, 90–110, 116–136, 147–167, 186–206, and 207–227; these read FLVH…VALL, LIAT…IPGF, NLNT…VVGV, FVGP…IGHL, IVLV…MMLM, and GILV…IYIA.

Belongs to the ATPase A chain family. As to quaternary structure, F-type ATPases have 2 components, CF(1) - the catalytic core - and CF(0) - the membrane proton channel. CF(1) has five subunits: alpha(3), beta(3), gamma(1), delta(1), epsilon(1). CF(0) has three main subunits: a(1), b(2) and c(9-12). The alpha and beta chains form an alternating ring which encloses part of the gamma chain. CF(1) is attached to CF(0) by a central stalk formed by the gamma and epsilon chains, while a peripheral stalk is formed by the delta and b chains.

Its subcellular location is the cell inner membrane. In terms of biological role, key component of the proton channel; it plays a direct role in the translocation of protons across the membrane. This Syntrophotalea carbinolica (strain DSM 2380 / NBRC 103641 / GraBd1) (Pelobacter carbinolicus) protein is ATP synthase subunit a 1.